The primary structure comprises 226 residues: Uridylate kinase (226 aa).

6–10 lines the ATP pocket; that stretch reads KISGK. Residue G43 coordinates UMP. 2 residues coordinate ATP: G44 and R48. UMP contacts are provided by residues D65 and 113–119; that span reads FQPGQST. The ATP site is built by T139, N140, Y145, and D148.

This sequence belongs to the UMP kinase family. In terms of assembly, homohexamer.

The protein resides in the cytoplasm. It carries out the reaction UMP + ATP = UDP + ADP. Its pathway is pyrimidine metabolism; CTP biosynthesis via de novo pathway; UDP from UMP (UMPK route): step 1/1. Inhibited by UTP. Functionally, catalyzes the reversible phosphorylation of UMP to UDP. This chain is Uridylate kinase, found in Saccharolobus islandicus (strain M.16.27) (Sulfolobus islandicus).